We begin with the raw amino-acid sequence, 42 residues long: Protein YkgS (42 aa).

The protein is Protein YkgS (ykgS) of Escherichia coli (strain K12).